Here is a 279-residue protein sequence, read N- to C-terminus: Diaminopimelate epimerase (279 aa).

Substrate is bound by residues Asn12, Gln45, and Asn65. Cys74 acts as the Proton donor in catalysis. Residues 75–76 (GN), Asn162, Asn195, and 213–214 (ER) contribute to the substrate site. Cys222 (proton acceptor) is an active-site residue. 223–224 (GS) is a binding site for substrate.

The protein belongs to the diaminopimelate epimerase family. In terms of assembly, homodimer.

The protein localises to the cytoplasm. It catalyses the reaction (2S,6S)-2,6-diaminopimelate = meso-2,6-diaminopimelate. It participates in amino-acid biosynthesis; L-lysine biosynthesis via DAP pathway; DL-2,6-diaminopimelate from LL-2,6-diaminopimelate: step 1/1. Its function is as follows. Catalyzes the stereoinversion of LL-2,6-diaminopimelate (L,L-DAP) to meso-diaminopimelate (meso-DAP), a precursor of L-lysine and an essential component of the bacterial peptidoglycan. This is Diaminopimelate epimerase from Shewanella loihica (strain ATCC BAA-1088 / PV-4).